The chain runs to 275 residues: Probable aquaporin NIP7-1 (275 aa).

Positions methionine 1 to aspartate 11 are enriched in basic and acidic residues. The interval methionine 1–histidine 26 is disordered. 2 consecutive transmembrane segments (helical) span residues isoleucine 47–serine 67 and valine 76–isoleucine 96. Positions asparagine 105–serine 107 match the NPA 1 motif. A run of 3 helical transmembrane segments spans residues isoleucine 127–valine 147, valine 161–leucine 181, and leucine 192–serine 212. The NPA 2 signature appears at asparagine 217–alanine 219. The helical transmembrane segment at phenylalanine 231–threonine 251 threads the bilayer. At serine 272 the chain carries Phosphoserine.

This sequence belongs to the MIP/aquaporin (TC 1.A.8) family. NIP (TC 1.A.8.12) subfamily. Expressed in floral buds.

It localises to the membrane. In terms of biological role, aquaporins facilitate the transport of water and small neutral solutes across cell membranes. The polypeptide is Probable aquaporin NIP7-1 (NIP7-1) (Arabidopsis thaliana (Mouse-ear cress)).